Here is a 290-residue protein sequence, read N- to C-terminus: Protein SSO1 (290 aa).

Residues Met1–Arg265 are Cytoplasmic-facing. The t-SNARE coiled-coil homology domain maps to Leu190–Ala252. The helical; Anchor for type IV membrane protein transmembrane segment at Cys266–Val287 threads the bilayer. Residues Lys288–Arg290 are Extracellular-facing.

This sequence belongs to the syntaxin family.

The protein resides in the membrane. In terms of biological role, required for vesicle fusion with the plasma membrane. In Saccharomyces cerevisiae (strain ATCC 204508 / S288c) (Baker's yeast), this protein is Protein SSO1 (SSO1).